A 591-amino-acid chain; its full sequence is V-type ATP synthase alpha chain (591 aa).

Residue 242-249 (GPFGAGKT) participates in ATP binding.

The protein belongs to the ATPase alpha/beta chains family.

It carries out the reaction ATP + H2O + 4 H(+)(in) = ADP + phosphate + 5 H(+)(out). Its function is as follows. Produces ATP from ADP in the presence of a proton gradient across the membrane. The V-type alpha chain is a catalytic subunit. The sequence is that of V-type ATP synthase alpha chain from Chlamydia trachomatis serovar A (strain ATCC VR-571B / DSM 19440 / HAR-13).